A 274-amino-acid chain; its full sequence is Diaminopimelate epimerase (274 aa).

The substrate site is built by N11, Q44, and N64. The Proton donor role is filled by C73. Substrate-binding positions include 74 to 75 (GN), N157, N190, and 208 to 209 (ER). Residue C217 is the Proton acceptor of the active site. Residue 218–219 (GS) coordinates substrate.

It belongs to the diaminopimelate epimerase family. In terms of assembly, homodimer.

The protein resides in the cytoplasm. It carries out the reaction (2S,6S)-2,6-diaminopimelate = meso-2,6-diaminopimelate. The protein operates within amino-acid biosynthesis; L-lysine biosynthesis via DAP pathway; DL-2,6-diaminopimelate from LL-2,6-diaminopimelate: step 1/1. In terms of biological role, catalyzes the stereoinversion of LL-2,6-diaminopimelate (L,L-DAP) to meso-diaminopimelate (meso-DAP), a precursor of L-lysine and an essential component of the bacterial peptidoglycan. In Glaesserella parasuis serovar 5 (strain SH0165) (Haemophilus parasuis), this protein is Diaminopimelate epimerase.